Here is a 66-residue protein sequence, read N- to C-terminus: Large ribosomal subunit protein bL32 (66 aa).

Positions 1 to 19 (MAVPKRKMSRSNTRARRSQ) are enriched in basic residues. The tract at residues 1–20 (MAVPKRKMSRSNTRARRSQW) is disordered.

This sequence belongs to the bacterial ribosomal protein bL32 family.

This is Large ribosomal subunit protein bL32 from Beutenbergia cavernae (strain ATCC BAA-8 / DSM 12333 / CCUG 43141 / JCM 11478 / NBRC 16432 / NCIMB 13614 / HKI 0122).